A 495-amino-acid polypeptide reads, in one-letter code: Bifunctional protein GlmU (495 aa).

The segment at 1–241 (MTFPGDTAVL…SALVAGVNNR (241 aa)) is pyrophosphorylase. Residues 12–15 (LAAG), Lys-26, Gln-83, 88–89 (GT), 112–114 (SGD), Gly-151, Glu-166, Asn-181, and Asn-239 contribute to the UDP-N-acetyl-alpha-D-glucosamine site. Mg(2+) is bound at residue Asp-114. Asn-239 contributes to the Mg(2+) binding site. Residues 242 to 262 (VQLAELASELNRRVVAAHQLA) form a linker region. The interval 263–495 (GVTVVDPATT…TQPPDADQTP (233 aa)) is N-acetyltransferase. The UDP-N-acetyl-alpha-D-glucosamine site is built by Arg-344 and Lys-362. His-374 serves as the catalytic Proton acceptor. UDP-N-acetyl-alpha-D-glucosamine contacts are provided by Tyr-377 and Asn-388. Acetyl-CoA-binding positions include Ala-391, 397 to 398 (NY), Ser-416, and Ala-434. A disordered region spans residues 457-495 (IENWVQRKRPGSPAAQASKRASEMACQQPTQPPDADQTP). Residues 483-495 (QQPTQPPDADQTP) show a composition bias toward low complexity.

It in the N-terminal section; belongs to the N-acetylglucosamine-1-phosphate uridyltransferase family. The protein in the C-terminal section; belongs to the transferase hexapeptide repeat family. Homotrimer. Mg(2+) serves as cofactor.

The protein localises to the cytoplasm. The catalysed reaction is alpha-D-glucosamine 1-phosphate + acetyl-CoA = N-acetyl-alpha-D-glucosamine 1-phosphate + CoA + H(+). The enzyme catalyses N-acetyl-alpha-D-glucosamine 1-phosphate + UTP + H(+) = UDP-N-acetyl-alpha-D-glucosamine + diphosphate. It participates in nucleotide-sugar biosynthesis; UDP-N-acetyl-alpha-D-glucosamine biosynthesis; N-acetyl-alpha-D-glucosamine 1-phosphate from alpha-D-glucosamine 6-phosphate (route II): step 2/2. The protein operates within nucleotide-sugar biosynthesis; UDP-N-acetyl-alpha-D-glucosamine biosynthesis; UDP-N-acetyl-alpha-D-glucosamine from N-acetyl-alpha-D-glucosamine 1-phosphate: step 1/1. Its pathway is bacterial outer membrane biogenesis; LPS lipid A biosynthesis. In terms of biological role, catalyzes the last two sequential reactions in the de novo biosynthetic pathway for UDP-N-acetylglucosamine (UDP-GlcNAc). The C-terminal domain catalyzes the transfer of acetyl group from acetyl coenzyme A to glucosamine-1-phosphate (GlcN-1-P) to produce N-acetylglucosamine-1-phosphate (GlcNAc-1-P), which is converted into UDP-GlcNAc by the transfer of uridine 5-monophosphate (from uridine 5-triphosphate), a reaction catalyzed by the N-terminal domain. The protein is Bifunctional protein GlmU of Mycobacterium tuberculosis (strain ATCC 25177 / H37Ra).